The chain runs to 338 residues: Tripartite motif-containing protein 44 (338 aa).

Disordered regions lie at residues 1–25 and 72–162; these read MASGGGAAFEELPHDGTCDECEPDE and ARGD…EFDP. The segment covering 95–162 has biased composition (acidic residues); the sequence is EAGEGIESEE…ETEAESEFDP (68 aa). Residues 109 to 153 are a coiled coil; that stretch reads EEESETEEESEDESEEDSEEEMEDEQESEAEEDNQEEGESEAEGE. The segment at 171-212 adopts a B box-type zinc-finger fold; sequence VAKRKCPDHGLDLSTYCQEDKQLICVLCPVIGAHHGHHLSTL. Positions 176, 179, 198, and 204 each coordinate Zn(2+). Positions 257 to 322 form a coiled coil; sequence QQEFKKVQKV…QLDTSNESAE (66 aa). The tract at residues 307–338 is disordered; it reads MAQAKEQLDTSNESAEPKAEGDEEEPGGTDED. Acidic residues predominate over residues 327 to 338; that stretch reads GDEEEPGGTDED.

Interacts (via coiled coil) with TRIM17 (via coiled coil).

In terms of biological role, may play a role in the process of differentiation and maturation of neuronal cells. May regulate the activity of TRIM17. Is a negative regulator of PAX6 expression. This Bos taurus (Bovine) protein is Tripartite motif-containing protein 44 (TRIM44).